Reading from the N-terminus, the 445-residue chain is Tubulin beta-1 chain (445 aa).

The MREI motif motif lies at 1-4; the sequence is MREI. The GTP site is built by glutamine 11, glutamate 69, serine 138, glycine 142, threonine 143, glycine 144, asparagine 204, and asparagine 226. Glutamate 69 is a Mg(2+) binding site. The tract at residues 425–445 is disordered; sequence YQDATAEEEGEFEEEGEEELA. Acidic residues predominate over residues 429-445; it reads TAEEEGEFEEEGEEELA. Glutamate 438 bears the 5-glutamyl polyglutamate mark.

The protein belongs to the tubulin family. In terms of assembly, dimer of alpha and beta chains. A typical microtubule is a hollow water-filled tube with an outer diameter of 25 nm and an inner diameter of 15 nM. Alpha-beta heterodimers associate head-to-tail to form protofilaments running lengthwise along the microtubule wall with the beta-tubulin subunit facing the microtubule plus end conferring a structural polarity. Microtubules usually have 13 protofilaments but different protofilament numbers can be found in some organisms and specialized cells. Mg(2+) serves as cofactor. Some glutamate residues at the C-terminus are polyglycylated, resulting in polyglycine chains on the gamma-carboxyl group. Glycylation is mainly limited to tubulin incorporated into axonemes (cilia and flagella) whereas glutamylation is prevalent in neuronal cells, centrioles, axonemes, and the mitotic spindle. Both modifications can coexist on the same protein on adjacent residues, and lowering polyglycylation levels increases polyglutamylation, and reciprocally. The precise function of polyglycylation is still unclear. Post-translationally, some glutamate residues at the C-terminus are polyglutamylated, resulting in polyglutamate chains on the gamma-carboxyl group. Polyglutamylation plays a key role in microtubule severing by spastin (SPAST). SPAST preferentially recognizes and acts on microtubules decorated with short polyglutamate tails: severing activity by SPAST increases as the number of glutamates per tubulin rises from one to eight, but decreases beyond this glutamylation threshold.

Its subcellular location is the cytoplasm. It localises to the cytoskeleton. Tubulin is the major constituent of microtubules, a cylinder consisting of laterally associated linear protofilaments composed of alpha- and beta-tubulin heterodimers. Microtubules grow by the addition of GTP-tubulin dimers to the microtubule end, where a stabilizing cap forms. Below the cap, tubulin dimers are in GDP-bound state, owing to GTPase activity of alpha-tubulin. This chain is Tubulin beta-1 chain, found in Gadus morhua (Atlantic cod).